Consider the following 1471-residue polypeptide: MGARSSVLSGKKTDELEKVRLRPGGKKRYCLKHIIWAVNELDRFGLAESLLESKEGCHKILTVLAPLVPTGSENLKSLFNTVCVIYCLHAEEKVKDTEEAKKIAQRHLAADTEKMPATSRPTAPPSGGNYPVQQIAGNYVHMPLSPRTLNAWVKLVEEKKFGAEVVPGFQALSEGCTPYDINQMLNCVGDHQAAMQIIREIINEEAADWDQQHPIPGPLPAGQLRDPRGSDIAGTTSTVEEQIQWMYRAQNPVPVGNIYRRWIQIGLQKCVRMYNPTNILDIKQGPKEPFQSYVDRFYKSLRAEQTDPAVKNWMTQTLLIQNANPDCKLVLKGLGMNPTLEEMLTACQGIGGPGQKARLMAEALKEALTPAPIPFAAAQQKAGKRGTVTCWNCGKVGHTAKQCRAPRRQGCWKCGKQGHIMSKCPERQAGFLRVRTLGKEASQLPHDPSASGSDTICTPDGPSRGHDTSGGDTICAPCRSSSGDAEKLHEDGETAEREPRETLQGGDRGFAAPQFSLWRRPVVRACIEGQPVEVLLDTGADDSIVAGIELGSNYTPKIVGGIGGFINTKEYKDVEIEVVGKRVRATIMTGDTPINIFGRNILNTLGMTLNFPVAKIEPVKVKLKPGKDGPKIRQWPLSKEKILALKEICEKMEKEGQLEEAPPTNPYNTPTFAIKKRDKNKWRMLIDFRELNKVTQDFTEVQLGIPHPAGLAEKRRITVLDVGDAYFSIPLDPNFRQYTAFTLPSINNAEPGKRYIYKVLPQGWKGSPAIFQYSMRKVLDPFRKANSDVIIIQYMDDILIASDRSDLEHDRVVSQLKELLNDMGFSTPEEKFQKDPPFKWMGYELWPKRWKLQKIQLPEKEVWTVNDIQKLVGVLNWAAQLFPGIKTRHICKLIRGKMTLTEEVQWTELAEAELQENKIILEQEQEGSYYKEGVPLEATVQKNLANQWTYKIHQGNRILKVGKYAKVKNTHTNGVRLLAHVVQKIGKEALVIWGEIPVFHLPVERETWDQWWTDYWQVTWIPEWDFVSTPPLVRLAYNLVKDPLEKVETYYTDGSCNRASKEGKAGYVTDRGKDKVKVLEQTTNQQAELEAFALALQDSGPQVNIIVDSQYVMGIVAGQPTETESPLVNQIIEEMIKKEAIYVGWVPAHRGLGGNQEVDHLVSQGIRQVLFLEKIEPAQEEHEKYHGNVKELVHKFGLPQLVAKQIVNSCDKCQQKGEAVHGQVNAELGTWQMDCTHLEGKVIIVAVHVASGFIEAEVIPQETGRQTALFLLKLASRWPITHLHTDNGANFTSQDVKMAAWWIGIEQTFGVPYNPQSQGVVEAMNHHLKNQIDRIRDQAVSIETVVLMAAHCMNFKRRGGIGDMTPAERLVNMITTEQEIQFFQAKNLKFQNFQVYYREGRDQLWKGPGELLWKGEGAVLIKVGTEIKVIPRRKAKIIRHYGGGKELDCGTDMEDTRQAREMAQSGQVPEA.

A lipid anchor (N-myristoyl glycine; by host) is attached at Gly-2. The interaction with Gp41 stretch occupies residues 7 to 31 (VLSGKKTDELEKVRLRPGGKKRYCL). Positions 16 to 22 (LEKVRLR) match the Nuclear export signal motif. Residues 26-32 (KKRYCLK) carry the Nuclear localization signal motif. Positions 105–114 (QRHLAADTEK) are enriched in basic and acidic residues. Residues 105–130 (QRHLAADTEKMPATSRPTAPPSGGNY) are disordered. Position 130 is a phosphotyrosine; by host (Tyr-130). Positions 186 to 223 (NCVGDHQAAMQIIREIINEEAADWDQQHPIPGPLPAGQ) are interaction with human PPIA/CYPA and NUP153. Positions 274–360 (YNPTNILDIK…GGPGQKARLM (87 aa)) are dimerization/Multimerization of capsid protein p24. 2 CCHC-type zinc fingers span residues 388–405 (VTCW…QCRA) and 409–426 (QGCW…KCPE). The segment at 441-508 (ASQLPHDPSA…PRETLQGGDR (68 aa)) is disordered. Positions 484-501 (DAEKLHEDGETAEREPRE) are enriched in basic and acidic residues. Residues 513–517 (PQFSL) are dimerization of protease. The region spanning 533–602 (EVLLDTGADD…PINIFGRNIL (70 aa)) is the Peptidase A2 domain. Catalysis depends on Asp-537, which acts as the For protease activity; shared with dimeric partner. Dimerization of protease regions lie at residues 561-567 (GIGGFIN) and 600-612 (NILN…LNFP). One can recognise a Reverse transcriptase domain in the interval 656 to 846 (GQLEEAPPTN…PFKWMGYELW (191 aa)). Positions 721, 796, and 797 each coordinate Mg(2+). The tract at residues 838–846 (FKWMGYELW) is RT 'primer grip'. Residues 1008–1024 (WDQWWTDYWQVTWIPEW) carry the Tryptophan repeat motif motif. The RNase H type-1 domain maps to 1044 to 1167 (LEKVETYYTD…VDHLVSQGIR (124 aa)). 4 residues coordinate Mg(2+): Asp-1053, Glu-1088, Asp-1108, and Asp-1159. The Integrase-type zinc finger occupies 1173-1214 (EKIEPAQEEHEKYHGNVKELVHKFGLPQLVAKQIVNSCDKCQ). The Zn(2+) site is built by His-1182, His-1186, Cys-1210, and Cys-1213. Positions 1224-1375 (VNAELGTWQM…PAERLVNMIT (152 aa)) constitute an Integrase catalytic domain. 3 residues coordinate Mg(2+): Asp-1234, Asp-1286, and Glu-1322. Positions 1393–1440 (FQVYYREGRDQLWKGPGELLWKGEGAVLIKVGTEIKVIPRRKAKIIRH) form a DNA-binding region, integrase-type.

As to quaternary structure, homotrimer; further assembles as hexamers of trimers. Interacts with gp41 (via C-terminus). Interacts with host CALM1; this interaction induces a conformational change in the Matrix protein, triggering exposure of the myristate group. Interacts with host AP3D1; this interaction allows the polyprotein trafficking to multivesicular bodies during virus assembly. Part of the pre-integration complex (PIC) which is composed of viral genome, matrix protein, Vpr and integrase. In terms of assembly, homodimer; the homodimer further multimerizes as homohexamers or homopentamers. Interacts with human PPIA/CYPA. Interacts with human NUP153. Interacts with host PDZD8; this interaction stabilizes the capsid. Interacts with monkey TRIM5; this interaction destabilizes the capsid. Homodimer, whose active site consists of two apposed aspartic acid residues. As to quaternary structure, heterodimer of p66 RT and p51 RT (RT p66/p51). Heterodimerization of RT is essential for DNA polymerase activity. The overall folding of the subdomains is similar in p66 RT and p51 RT but the spatial arrangements of the subdomains are dramatically different. In terms of assembly, homotetramer; may further associate as a homohexadecamer. Part of the pre-integration complex (PIC) which is composed of viral genome, matrix protein, Vpr and integrase. Interacts with human SMARCB1/INI1 and human PSIP1/LEDGF isoform 1. Interacts with human KPNA3; this interaction might play a role in nuclear import of the pre-integration complex. Interacts with human NUP153; this interaction might play a role in nuclear import of the pre-integration complex. Mg(2+) is required as a cofactor. Specific enzymatic cleavages by the viral protease yield mature proteins. The protease is released by autocatalytic cleavage. The polyprotein is cleaved during and after budding, this process is termed maturation. Proteolytic cleavage of p66 RT removes the RNase H domain to yield the p51 RT subunit. Nucleocapsid protein p7 might be further cleaved after virus entry.

The protein localises to the host cell membrane. Its subcellular location is the host endosome. It localises to the host multivesicular body. The protein resides in the virion membrane. It is found in the host nucleus. The protein localises to the host cytoplasm. Its subcellular location is the virion. It carries out the reaction Endopeptidase for which the P1 residue is preferably hydrophobic.. The enzyme catalyses Endohydrolysis of RNA in RNA/DNA hybrids. Three different cleavage modes: 1. sequence-specific internal cleavage of RNA. Human immunodeficiency virus type 1 and Moloney murine leukemia virus enzymes prefer to cleave the RNA strand one nucleotide away from the RNA-DNA junction. 2. RNA 5'-end directed cleavage 13-19 nucleotides from the RNA end. 3. DNA 3'-end directed cleavage 15-20 nucleotides away from the primer terminus.. It catalyses the reaction 3'-end directed exonucleolytic cleavage of viral RNA-DNA hybrid.. The catalysed reaction is DNA(n) + a 2'-deoxyribonucleoside 5'-triphosphate = DNA(n+1) + diphosphate. Its activity is regulated as follows. Protease: The viral protease is inhibited by many synthetic protease inhibitors (PIs), such as amprenavir, atazanavir, indinavir, loprinavir, nelfinavir, ritonavir and saquinavir. Use of protease inhibitors in tritherapy regimens permit more ambitious therapeutic strategies. Reverse transcriptase/ribonuclease H: RT can be inhibited either by nucleoside RT inhibitors (NRTIs) or by non nucleoside RT inhibitors (NNRTIs). NRTIs act as chain terminators, whereas NNRTIs inhibit DNA polymerization by binding a small hydrophobic pocket near the RT active site and inducing an allosteric change in this region. Classical NRTIs are abacavir, adefovir (PMEA), didanosine (ddI), lamivudine (3TC), stavudine (d4T), tenofovir (PMPA), zalcitabine (ddC), and zidovudine (AZT). Classical NNRTIs are atevirdine (BHAP U-87201E), delavirdine, efavirenz (DMP-266), emivirine (I-EBU), and nevirapine (BI-RG-587). The tritherapies used as a basic effective treatment of AIDS associate two NRTIs and one NNRTI. Its function is as follows. Mediates, with Gag polyprotein, the essential events in virion assembly, including binding the plasma membrane, making the protein-protein interactions necessary to create spherical particles, recruiting the viral Env proteins, and packaging the genomic RNA via direct interactions with the RNA packaging sequence (Psi). Gag-Pol polyprotein may regulate its own translation, by the binding genomic RNA in the 5'-UTR. At low concentration, the polyprotein would promote translation, whereas at high concentration, the polyprotein would encapsidate genomic RNA and then shut off translation. Functionally, targets the polyprotein to the plasma membrane via a multipartite membrane-binding signal, that includes its myristoylated N-terminus. Matrix protein is part of the pre-integration complex. Implicated in the release from host cell mediated by Vpu. Binds to RNA. Forms the conical core that encapsulates the genomic RNA-nucleocapsid complex in the virion. Most core are conical, with only 7% tubular. The core is constituted by capsid protein hexamer subunits. The core is disassembled soon after virion entry. Host restriction factors such as TRIM5-alpha or TRIMCyp bind retroviral capsids and cause premature capsid disassembly, leading to blocks in reverse transcription. Capsid restriction by TRIM5 is one of the factors which restricts HIV-1 to the human species. Host PIN1 apparently facilitates the virion uncoating. On the other hand, interactions with PDZD8 or CYPA stabilize the capsid. In terms of biological role, encapsulates and protects viral dimeric unspliced genomic RNA (gRNA). Binds these RNAs through its zinc fingers. Acts as a nucleic acid chaperone which is involved in rearangement of nucleic acid secondary structure during gRNA retrotranscription. Also facilitates template switch leading to recombination. As part of the polyprotein, participates in gRNA dimerization, packaging, tRNA incorporation and virion assembly. Its function is as follows. Aspartyl protease that mediates proteolytic cleavages of Gag and Gag-Pol polyproteins during or shortly after the release of the virion from the plasma membrane. Cleavages take place as an ordered, step-wise cascade to yield mature proteins. This process is called maturation. Displays maximal activity during the budding process just prior to particle release from the cell. Also cleaves Nef and Vif, probably concomitantly with viral structural proteins on maturation of virus particles. Hydrolyzes host EIF4GI and PABP1 in order to shut off the capped cellular mRNA translation. The resulting inhibition of cellular protein synthesis serves to ensure maximal viral gene expression and to evade host immune response. Functionally, multifunctional enzyme that converts the viral RNA genome into dsDNA in the cytoplasm, shortly after virus entry into the cell. This enzyme displays a DNA polymerase activity that can copy either DNA or RNA templates, and a ribonuclease H (RNase H) activity that cleaves the RNA strand of RNA-DNA heteroduplexes in a partially processive 3' to 5' endonucleasic mode. Conversion of viral genomic RNA into dsDNA requires many steps. A tRNA(3)-Lys binds to the primer-binding site (PBS) situated at the 5'-end of the viral RNA. RT uses the 3' end of the tRNA primer to perform a short round of RNA-dependent minus-strand DNA synthesis. The reading proceeds through the U5 region and ends after the repeated (R) region which is present at both ends of viral RNA. The portion of the RNA-DNA heteroduplex is digested by the RNase H, resulting in a ssDNA product attached to the tRNA primer. This ssDNA/tRNA hybridizes with the identical R region situated at the 3' end of viral RNA. This template exchange, known as minus-strand DNA strong stop transfer, can be either intra- or intermolecular. RT uses the 3' end of this newly synthesized short ssDNA to perform the RNA-dependent minus-strand DNA synthesis of the whole template. RNase H digests the RNA template except for two polypurine tracts (PPTs) situated at the 5'-end and near the center of the genome. It is not clear if both polymerase and RNase H activities are simultaneous. RNase H probably can proceed both in a polymerase-dependent (RNA cut into small fragments by the same RT performing DNA synthesis) and a polymerase-independent mode (cleavage of remaining RNA fragments by free RTs). Secondly, RT performs DNA-directed plus-strand DNA synthesis using the PPTs that have not been removed by RNase H as primers. PPTs and tRNA primers are then removed by RNase H. The 3' and 5' ssDNA PBS regions hybridize to form a circular dsDNA intermediate. Strand displacement synthesis by RT to the PBS and PPT ends produces a blunt ended, linear dsDNA copy of the viral genome that includes long terminal repeats (LTRs) at both ends. Catalyzes viral DNA integration into the host chromosome, by performing a series of DNA cutting and joining reactions. This enzyme activity takes place after virion entry into a cell and reverse transcription of the RNA genome in dsDNA. The first step in the integration process is 3' processing. This step requires a complex comprising the viral genome, matrix protein, Vpr and integrase. This complex is called the pre-integration complex (PIC). The integrase protein removes 2 nucleotides from each 3' end of the viral DNA, leaving recessed CA OH's at the 3' ends. In the second step, the PIC enters cell nucleus. This process is mediated through integrase and Vpr proteins, and allows the virus to infect a non dividing cell. This ability to enter the nucleus is specific of lentiviruses, other retroviruses cannot and rely on cell division to access cell chromosomes. In the third step, termed strand transfer, the integrase protein joins the previously processed 3' ends to the 5' ends of strands of target cellular DNA at the site of integration. The 5'-ends are produced by integrase-catalyzed staggered cuts, 5 bp apart. A Y-shaped, gapped, recombination intermediate results, with the 5'-ends of the viral DNA strands and the 3' ends of target DNA strands remaining unjoined, flanking a gap of 5 bp. The last step is viral DNA integration into host chromosome. This involves host DNA repair synthesis in which the 5 bp gaps between the unjoined strands are filled in and then ligated. Since this process occurs at both cuts flanking the HIV genome, a 5 bp duplication of host DNA is produced at the ends of HIV-1 integration. Alternatively, Integrase may catalyze the excision of viral DNA just after strand transfer, this is termed disintegration. This is Gag-Pol polyprotein (gag-pol) from Human immunodeficiency virus type 2 subtype B (isolate UC1) (HIV-2).